Reading from the N-terminus, the 525-residue chain is GMP synthase [glutamine-hydrolyzing] (525 aa).

Residues 9–207 (RILILDFGSQ…VHEICGCPAD (199 aa)) form the Glutamine amidotransferase type-1 domain. The Nucleophile role is filled by Cys86. Catalysis depends on residues His181 and Glu183. Residues 208–400 (WTPGNIVDDL…LGLPADMVYR (193 aa)) enclose the GMPS ATP-PPase domain. 235–241 (SGGVDSS) lines the ATP pocket.

As to quaternary structure, homodimer.

It carries out the reaction XMP + L-glutamine + ATP + H2O = GMP + L-glutamate + AMP + diphosphate + 2 H(+). It participates in purine metabolism; GMP biosynthesis; GMP from XMP (L-Gln route): step 1/1. Its function is as follows. Catalyzes the synthesis of GMP from XMP. The sequence is that of GMP synthase [glutamine-hydrolyzing] from Alkalilimnicola ehrlichii (strain ATCC BAA-1101 / DSM 17681 / MLHE-1).